The sequence spans 341 residues: Heat-inducible transcription repressor HrcA (341 aa).

The protein belongs to the HrcA family.

In terms of biological role, negative regulator of class I heat shock genes (grpE-dnaK-dnaJ and groELS operons). Prevents heat-shock induction of these operons. In Carboxydothermus hydrogenoformans (strain ATCC BAA-161 / DSM 6008 / Z-2901), this protein is Heat-inducible transcription repressor HrcA.